Consider the following 389-residue polypeptide: Gibberellin 20 oxidase 2 (389 aa).

The segment covering 1 to 17 (MVAEHPTPPQPHQPPPM) has biased composition (pro residues). Residues 1–23 (MVAEHPTPPQPHQPPPMDSTAGS) are disordered. A Fe2OG dioxygenase domain is found at 224–324 (DSSSIMRCNY…RRSLAFFLCP (101 aa)). Fe cation contacts are provided by His-249, Asp-251, and His-305. Residue Arg-315 is part of the active site.

This sequence belongs to the iron/ascorbate-dependent oxidoreductase family. GA20OX subfamily. The cofactor is Fe cation. Requires L-ascorbate as cofactor.

The catalysed reaction is gibberellin A12 + 2 2-oxoglutarate + 3 O2 + H(+) = gibberellin A9 + 2 succinate + 3 CO2 + 2 H2O. It catalyses the reaction gibberellin A53 + 2 2-oxoglutarate + 3 O2 + H(+) = gibberellin A20 + 2 succinate + 3 CO2 + 2 H2O. In terms of biological role, key oxidase enzyme in the biosynthesis of gibberellin that catalyzes the conversion of GA53 to GA20 via a three-step oxidation at C-20 of the GA skeleton. This Oryza sativa subsp. indica (Rice) protein is Gibberellin 20 oxidase 2 (20ox2).